The chain runs to 597 residues: Phosphomethylpyrimidine synthase (597 aa).

Substrate contacts are provided by residues N207, M236, Y265, H301, 321–323, 362–365, and E401; these read SRG and DGLR. Residue H405 coordinates Zn(2+). Y428 provides a ligand contact to substrate. H469 is a Zn(2+) binding site. [4Fe-4S] cluster is bound by residues C549, C552, and C557.

The protein belongs to the ThiC family. As to quaternary structure, homodimer. The cofactor is [4Fe-4S] cluster.

The enzyme catalyses 5-amino-1-(5-phospho-beta-D-ribosyl)imidazole + S-adenosyl-L-methionine = 4-amino-2-methyl-5-(phosphooxymethyl)pyrimidine + CO + 5'-deoxyadenosine + formate + L-methionine + 3 H(+). Its pathway is cofactor biosynthesis; thiamine diphosphate biosynthesis. Catalyzes the synthesis of the hydroxymethylpyrimidine phosphate (HMP-P) moiety of thiamine from aminoimidazole ribotide (AIR) in a radical S-adenosyl-L-methionine (SAM)-dependent reaction. The polypeptide is Phosphomethylpyrimidine synthase (Gluconobacter oxydans (strain 621H) (Gluconobacter suboxydans)).